Reading from the N-terminus, the 99-residue chain is Osteocalcin (99 aa).

The N-terminal stretch at 1-23 is a signal peptide; that stretch reads MRTLSLLTLLALTAFCLSDLAGA. Residues 24 to 49 constitute a propeptide that is removed on maturation; it reads KPSDSESDKAFMSKQEGSKVVNRLRR. A Gla domain is found at 50–96; it reads YLNNGLGAPAPYPDPLEPHREVCELNPNCDELADHIGFQDAYKRIYG. At Pro58 the chain carries Hydroxyproline. 4 residues coordinate Ca(2+): Glu66, Glu70, Glu73, and Asp79. Glu66, Glu70, and Glu73 each carry 4-carboxyglutamate. The cysteines at positions 72 and 78 are disulfide-linked.

This sequence belongs to the osteocalcin/matrix Gla protein family. Post-translationally, gamma-carboxyglutamate residues are formed by vitamin K dependent carboxylation by GGCX. These residues are essential for the binding of calcium. Decarboxylation promotes the hormone activity.

The protein resides in the secreted. In terms of biological role, the carboxylated form is one of the main organic components of the bone matrix, which constitutes 1-2% of the total bone protein: it acts as a negative regulator of bone formation and is required to limit bone formation without impairing bone resorption or mineralization. The carboxylated form binds strongly to apatite and calcium. Its function is as follows. The uncarboxylated form acts as a hormone secreted by osteoblasts, which regulates different cellular processes, such as energy metabolism, male fertility and brain development. Regulates of energy metabolism by acting as a hormone favoring pancreatic beta-cell proliferation, insulin secretion and sensitivity and energy expenditure. Uncarboxylated osteocalcin hormone also promotes testosterone production in the testes: acts as a ligand for G protein-coupled receptor GPRC6A at the surface of Leydig cells, initiating a signaling response that promotes the expression of enzymes required for testosterone synthesis in a CREB-dependent manner. Also acts as a regulator of brain development: osteocalcin hormone crosses the blood-brain barrier and acts as a ligand for GPR158 on neurons, initiating a signaling response that prevents neuronal apoptosis in the hippocampus, favors the synthesis of all monoamine neurotransmitters and inhibits that of gamma-aminobutyric acid (GABA). Osteocalcin also crosses the placenta during pregnancy and maternal osteocalcin is required for fetal brain development. The chain is Osteocalcin (Bglap) from Rattus norvegicus (Rat).